Reading from the N-terminus, the 214-residue chain is Thiamine-phosphate synthase (214 aa).

4-amino-2-methyl-5-(diphosphooxymethyl)pyrimidine-binding positions include 37-41 and N73; that span reads QYREK. Positions 74 and 93 each coordinate Mg(2+). S112 is a binding site for 4-amino-2-methyl-5-(diphosphooxymethyl)pyrimidine. 139–141 lines the 2-[(2R,5Z)-2-carboxy-4-methylthiazol-5(2H)-ylidene]ethyl phosphate pocket; sequence TIS. 4-amino-2-methyl-5-(diphosphooxymethyl)pyrimidine is bound at residue K142. 2-[(2R,5Z)-2-carboxy-4-methylthiazol-5(2H)-ylidene]ethyl phosphate is bound by residues G171 and 191–192; that span reads IS.

The protein belongs to the thiamine-phosphate synthase family. Mg(2+) serves as cofactor.

It catalyses the reaction 2-[(2R,5Z)-2-carboxy-4-methylthiazol-5(2H)-ylidene]ethyl phosphate + 4-amino-2-methyl-5-(diphosphooxymethyl)pyrimidine + 2 H(+) = thiamine phosphate + CO2 + diphosphate. It carries out the reaction 2-(2-carboxy-4-methylthiazol-5-yl)ethyl phosphate + 4-amino-2-methyl-5-(diphosphooxymethyl)pyrimidine + 2 H(+) = thiamine phosphate + CO2 + diphosphate. The catalysed reaction is 4-methyl-5-(2-phosphooxyethyl)-thiazole + 4-amino-2-methyl-5-(diphosphooxymethyl)pyrimidine + H(+) = thiamine phosphate + diphosphate. It participates in cofactor biosynthesis; thiamine diphosphate biosynthesis; thiamine phosphate from 4-amino-2-methyl-5-diphosphomethylpyrimidine and 4-methyl-5-(2-phosphoethyl)-thiazole: step 1/1. In terms of biological role, condenses 4-methyl-5-(beta-hydroxyethyl)thiazole monophosphate (THZ-P) and 2-methyl-4-amino-5-hydroxymethyl pyrimidine pyrophosphate (HMP-PP) to form thiamine monophosphate (TMP). This is Thiamine-phosphate synthase from Listeria innocua serovar 6a (strain ATCC BAA-680 / CLIP 11262).